The chain runs to 135 residues: Sex-regulated protein janus-A (135 aa).

Substrate is bound at residue Lys37. The Proton acceptor role is filled by His63. 104 to 106 serves as a coordination point for substrate; it reads SQG.

This sequence belongs to the janus family. As to expression, somatic and germline cells. Isoform B is expressed in both sexes and in somatic and germ line cells. Isoform A is expressed in males and is germ line specific.

JanA and janB regulate somatic sex differentiation. In Drosophila melanogaster (Fruit fly), this protein is Sex-regulated protein janus-A (janA).